We begin with the raw amino-acid sequence, 303 residues long: Phospholipase A1 2 (303 aa).

Cysteines 6 and 90 form a disulfide. The Nucleophile role is filled by S140. The Charge relay system role is filled by D168. Residues C179 and C184 are joined by a disulfide bond. H232 serves as the catalytic Charge relay system. 3 disulfides stabilise this stretch: C247–C271, C248–C296, and C264–C269.

This sequence belongs to the AB hydrolase superfamily. Lipase family. In terms of tissue distribution, expressed by the venom gland.

It is found in the secreted. It carries out the reaction a 1,2-diacyl-sn-glycero-3-phosphocholine + H2O = a 2-acyl-sn-glycero-3-phosphocholine + a fatty acid + H(+). In terms of biological role, catalyzes the hydrolysis of phosphatidylcholine with phospholipase A1 activity. May act as an allergen and induce hemolytic activity. This chain is Phospholipase A1 2, found in Dolichovespula maculata (Bald-faced hornet).